Reading from the N-terminus, the 88-residue chain is Small ribosomal subunit protein uS17 (88 aa).

The protein belongs to the universal ribosomal protein uS17 family. Part of the 30S ribosomal subunit.

In terms of biological role, one of the primary rRNA binding proteins, it binds specifically to the 5'-end of 16S ribosomal RNA. The polypeptide is Small ribosomal subunit protein uS17 (Azotobacter vinelandii (strain DJ / ATCC BAA-1303)).